The following is a 207-amino-acid chain: Dephospho-CoA kinase (207 aa).

One can recognise a DPCK domain in the interval 12 to 207; the sequence is LIGITGMIGG…LYSTLLGKML (196 aa). 20-25 serves as a coordination point for ATP; sequence GGGKST.

Belongs to the CoaE family.

Its subcellular location is the cytoplasm. It carries out the reaction 3'-dephospho-CoA + ATP = ADP + CoA + H(+). The protein operates within cofactor biosynthesis; coenzyme A biosynthesis; CoA from (R)-pantothenate: step 5/5. Functionally, catalyzes the phosphorylation of the 3'-hydroxyl group of dephosphocoenzyme A to form coenzyme A. This is Dephospho-CoA kinase from Leptospira interrogans serogroup Icterohaemorrhagiae serovar Lai (strain 56601).